A 105-amino-acid chain; its full sequence is MTEALTHVIDHEGQGTPATVRLTVLPSGHTRVGVTDPDPRVPPLLPGPAGVTDESGRGLALLDAPAPRWGVEQRGDRRAVRCEPAGEPPLDDVRTPAAPAVRSGR.

2 disordered regions span residues 29–55 (HTRV…TDES) and 72–105 (EQRG…RSGR). The segment covering 72–81 (EQRGDRRAVR) has biased composition (basic and acidic residues).

This is an uncharacterized protein from Streptomyces coelicolor (strain ATCC BAA-471 / A3(2) / M145).